Here is a 156-residue protein sequence, read N- to C-terminus: Acyl carrier protein, mitochondrial (156 aa).

The N-terminal 68 residues, 1-68, are a transit peptide targeting the mitochondrion; it reads MAVRVLCACV…GRVTQLCRQY (68 aa). The region spanning 77 to 152 is the Carrier domain; that stretch reads EGIKDRVLYV…EIVDYIADKK (76 aa). The residue at position 88 (K88) is an N6-acetyllysine. S112 is modified (O-(pantetheine 4'-phosphoryl)serine).

In terms of assembly, mammalian complex I is composed of 45 different subunits. Interacts with ETFRF1. Identified in a complex composed of MALSU1, MIEF1 upstream open reading frame protein and NDUFAB1; within the trimeric complex MIEF1 upstream open reading frame protein functions as a bridging scaffold that interacts with MALSU1 on one side, and with NDUFAB1 on the other side. The complex interacts with the mitochondrial large ribosomal subunit. Interacts with alpha-1-microglobulin chain; this interaction is required for the maintenance of mitochondrial redox homeostasis. Component of the mitochondrial core iron-sulfur cluster (ISC) complex composed of NFS1, LYRM4, NDUFAB1, ISCU, FXN, and FDX2; this complex is a heterohexamer containing two copies of each monomer. Component of the cyteine desulfurase complex composed of NFS1, LYRM4 and NDUFAB1; this complex contributes to the stability and cysteine desulfurase activity of NFS1. In terms of processing, phosphopantetheinylation at Ser-112 is essential for interactions with LYR motif-containing proteins.

Its subcellular location is the mitochondrion. Carrier of the growing fatty acid chain in fatty acid biosynthesis. Accessory and non-catalytic subunit of the mitochondrial membrane respiratory chain NADH dehydrogenase (Complex I), which functions in the transfer of electrons from NADH to the respiratory chain. Accessory protein, of the core iron-sulfur cluster (ISC) assembly complex, that regulates, in association with LYRM4, the stability and the cysteine desulfurase activity of NFS1 and participates in the [2Fe-2S] clusters assembly on the scaffolding protein ISCU. The core iron-sulfur cluster (ISC) assembly complex is involved in the de novo synthesis of a [2Fe-2S] cluster, the first step of the mitochondrial iron-sulfur protein biogenesis. This process is initiated by the cysteine desulfurase complex (NFS1:LYRM4:NDUFAB1) that produces persulfide which is delivered on the scaffold protein ISCU in a FXN-dependent manner. Then this complex is stabilized by FDX2 which provides reducing equivalents to accomplish the [2Fe-2S] cluster assembly. Finally, the [2Fe-2S] cluster is transferred from ISCU to chaperone proteins, including HSCB, HSPA9 and GLRX5. The sequence is that of Acyl carrier protein, mitochondrial from Bos taurus (Bovine).